The sequence spans 392 residues: Phosphoglycerate kinase (392 aa).

Substrate is bound by residues 21 to 23, arginine 36, 59 to 62, arginine 113, and arginine 146; these read DLN and HLGR. Residues lysine 197, glutamate 319, and 345-348 contribute to the ATP site; that span reads GGDT.

The protein belongs to the phosphoglycerate kinase family. As to quaternary structure, monomer.

The protein resides in the cytoplasm. The catalysed reaction is (2R)-3-phosphoglycerate + ATP = (2R)-3-phospho-glyceroyl phosphate + ADP. It functions in the pathway carbohydrate degradation; glycolysis; pyruvate from D-glyceraldehyde 3-phosphate: step 2/5. In Alkalilimnicola ehrlichii (strain ATCC BAA-1101 / DSM 17681 / MLHE-1), this protein is Phosphoglycerate kinase.